A 2564-amino-acid polypeptide reads, in one-letter code: Highly reducing polyketide synthase 40 (2564 aa).

One can recognise a Ketosynthase family 3 (KS3) domain in the interval 8 to 432 (PEPIAIIGMS…GTNAHVIVDR (425 aa)). Residues C181, H317, and H358 each act as for beta-ketoacyl synthase activity in the active site. The tract at residues 435-482 (EHNHSNGTNGTNGTHHHNGTNGSNGNGTNGTNGTNGTDGFHDTESISD) is disordered. Low complexity predominate over residues 439–455 (SNGTNGTNGTHHHNGTN). Residues 473-482 (GFHDTESISD) show a composition bias toward basic and acidic residues. The segment at 580–914 (YVFGGQGAQY…SAAENMLRTL (335 aa)) is malonyl-CoA:ACP transacylase (MAT) domain. Positions 973–1113 (HELLGNLSAD…GRIRAVVDQG (141 aa)) are N-terminal hotdog fold. The dehydratase (DH) domain stretch occupies residues 973-1280 (HELLGNLSAD…GLRTAQLPSD (308 aa)). One can recognise a PKS/mFAS DH domain in the interval 973 to 1283 (HELLGNLSAD…TAQLPSDVVN (311 aa)). Residue H1005 is the Proton acceptor; for dehydratase activity of the active site. The segment at 1130–1283 (AASVPHHITS…TAQLPSDVVN (154 aa)) is C-terminal hotdog fold. The active-site Proton donor; for dehydratase activity is the D1199. The tract at residues 1451–1556 (LEVGGGTASA…RQLLRPGGTL (106 aa)) is methyltransferase (CMet) domain. The tract at residues 1854–2167 (GLLETFRWVD…AGKHMGKVIL (314 aa)) is enoyl reductase (ER) domain. The ketoreductase (KR) domain stretch occupies residues 2191–2370 (ATYLLVGGFG…SFAIDVGVVS (180 aa)). Residues 2472-2549 (EALDAVGQAV…ELIHLVAGKS (78 aa)) form the Carrier domain. S2509 carries the O-(pantetheine 4'-phosphoryl)serine modification.

It functions in the pathway secondary metabolite biosynthesis. In terms of biological role, highly reducing polyketide synthase; part of the gene cluster that mediates the biosynthesis of the lipopeptides W493 A and B. W493 A and B consist of six amino acid residues D-allo-thr, L-Ala, D-Ala, L-Gln, D-Tyr, and L-Val/L-Ile linked to a 3-hydroxy-4-methyltetradecanoic acid polyketide chain. The biosynthesis starts with formation of the linear polyketide chain by the highly reducing polyketide synthase PKS40. The gene cluster contains a putative acyl-CoA ligase (FPSE_09184) for formation of a CoA thioester polyketide. The thiol bond could be hydrolyzed by the putative thioesterase (FPSE_09186) and then accepted by the first T domain in module 1 of NRPS32. The second T domain is responsible for accepting a threonine, which is adenylated by the A domain and epimerized to the D-allo-threonine formed by the E domain. The five successive modules incorporate Ala, Ala, Gln, Tyr, and Val/Ile into the final product, which is released by cyclization. In Fusarium pseudograminearum (strain CS3096) (Wheat and barley crown-rot fungus), this protein is Highly reducing polyketide synthase 40.